A 998-amino-acid polypeptide reads, in one-letter code: Beta-galactosidase (998 aa).

Glu-431 functions as the Proton donor in the catalytic mechanism. Glu-508 acts as the Nucleophile in catalysis.

It belongs to the glycosyl hydrolase 2 family.

It catalyses the reaction Hydrolysis of terminal non-reducing beta-D-galactose residues in beta-D-galactosides.. This chain is Beta-galactosidase (lacZ), found in Lactococcus lactis subsp. lactis (strain IL1403) (Streptococcus lactis).